Consider the following 557-residue polypeptide: Formate--tetrahydrofolate ligase 2 (557 aa).

Residue 66 to 73 coordinates ATP; sequence TPAGEGKT.

The protein belongs to the formate--tetrahydrofolate ligase family.

The catalysed reaction is (6S)-5,6,7,8-tetrahydrofolate + formate + ATP = (6R)-10-formyltetrahydrofolate + ADP + phosphate. It functions in the pathway one-carbon metabolism; tetrahydrofolate interconversion. This Streptococcus pyogenes serotype M18 (strain MGAS8232) protein is Formate--tetrahydrofolate ligase 2.